Consider the following 276-residue polypeptide: Insulin-induced gene 1 protein (276 aa).

2 disordered regions span residues 1–26 and 49–73; these read MPRL…PRAS and AAHG…QGSS. At 1-83 the chain is on the cytoplasmic side; the sequence is MPRLDDHLWR…SHVNSWHHHL (83 aa). Residues 16–25 show a composition bias toward basic residues; it reads GTKHRSHPRA. Residues 84 to 106 form a helical membrane-spanning segment; it reads VQRSLVLFSVGVVLALVLNLLQV. Residues 107 to 125 are Extracellular-facing; that stretch reads QRNVTLFPDEVIATIFSSA. A helical membrane pass occupies residues 126–143; it reads WWVPPCCGTAAAVVGLLY. Residues 144 to 158 are Cytoplasmic-facing; that stretch reads PCIDSHLGEPHKFKR. Residues lysine 155 and lysine 157 each participate in a glycyl lysine isopeptide (Lys-Gly) (interchain with G-Cter in ubiquitin) cross-link. A helical membrane pass occupies residues 159–181; it reads EWASVMRCVAVFVGINHASAKLD. The Extracellular segment spans residues 182–184; the sequence is FAN. Residues 185-203 form a helical membrane-spanning segment; it reads NVQLSLTLAALSLGLWWTF. The Cytoplasmic portion of the chain corresponds to 204 to 208; the sequence is DRSRS. Phosphoserine is present on serine 206. A helical membrane pass occupies residues 209–230; that stretch reads GLGLGITIAFLATLITQLLVYN. At 231–244 the chain is on the extracellular side; that stretch reads GVYQYTSPDFLYIR. Residues 245–262 form a helical membrane-spanning segment; that stretch reads SWLPCIFFSGGVTVGNIG. Over 263-276 the chain is Cytoplasmic; the sequence is RQLAMGVPEKPHSD. The KxHxx signature appears at 270–276; the sequence is PEKPHSD.

Belongs to the INSIG family. In terms of assembly, interacts with SCAP; interaction is direct and only takes place in the presence of sterols; it prevents interaction between SCAP and the coat protein complex II (COPII). Associates with the SCAP-SREBP complex (composed of SCAP and SREBF1/SREBP1 or SREBF2/SREBP2); association is mediated via its interaction with SCAP and only takes place in the presence of sterols. Interaction with SCAP is mutually exclusive with PAQR3. Interacts with HMGCR (via its SSD); the interaction, accelerated by sterols, leads to the recruitment of HMGCR to AMFR/gp78 for its ubiquitination by the sterol-mediated ERAD pathway. Interacts with AMFR/gp78 (via its membrane domain); the interaction recruits HMCR at the ER membrane for its ubiquitination and degradation by the sterol-mediated ERAD pathway. Interacts with SOAT2/ACAT2; leading to promote recruitment of AMFR/gp78 and subsequent ubiquitination of SOAT2/ACAT2. Interacts with RNF139. Interacts with RNF145. Phosphorylation at Ser-206 by PCK1 reduces binding to oxysterol, disrupting the interaction between INSIG1 and SCAP, thereby promoting nuclear translocation of SREBP proteins (SREBF1/SREBP1 or SREBF2/SREBP2) and subsequent transcription of downstream lipogenesis-related genes. Post-translationally, ubiquitinated by AMFR/gp78 in response to sterol deprivation, leading to its degradation: when the SCAP-SREBP complex becomes dissociated from INSIG1, INSIG1 is then ubiquitinated and degraded in proteasomes. Although ubiquitination is required for rapid INSIG1 degradation, it is not required for release of the SCAP-SREBP complex. Ubiquitinated by RNF139.

The protein resides in the endoplasmic reticulum membrane. Functionally, oxysterol-binding protein that mediates feedback control of cholesterol synthesis by controlling both endoplasmic reticulum to Golgi transport of SCAP and degradation of HMGCR. Acts as a negative regulator of cholesterol biosynthesis by mediating the retention of the SCAP-SREBP complex in the endoplasmic reticulum, thereby blocking the processing of sterol regulatory element-binding proteins (SREBPs) SREBF1/SREBP1 and SREBF2/SREBP2. Binds oxysterol, including 25-hydroxycholesterol, regulating interaction with SCAP and retention of the SCAP-SREBP complex in the endoplasmic reticulum. In presence of oxysterol, interacts with SCAP, retaining the SCAP-SREBP complex in the endoplasmic reticulum, thereby preventing SCAP from escorting SREBF1/SREBP1 and SREBF2/SREBP2 to the Golgi. Sterol deprivation or phosphorylation by PCK1 reduce oxysterol-binding, disrupting the interaction between INSIG1 and SCAP, thereby promoting Golgi transport of the SCAP-SREBP complex, followed by processing and nuclear translocation of SREBF1/SREBP1 and SREBF2/SREBP2. Also regulates cholesterol synthesis by regulating degradation of HMGCR: initiates the sterol-mediated ubiquitin-mediated endoplasmic reticulum-associated degradation (ERAD) of HMGCR via recruitment of the reductase to the ubiquitin ligases AMFR/gp78 and/or RNF139. Also regulates degradation of SOAT2/ACAT2 when the lipid levels are low: initiates the ubiquitin-mediated degradation of SOAT2/ACAT2 via recruitment of the ubiquitin ligases AMFR/gp78. The polypeptide is Insulin-induced gene 1 protein (Bos taurus (Bovine)).